The primary structure comprises 250 residues: Indole-3-glycerol phosphate synthase (250 aa).

Belongs to the TrpC family.

The catalysed reaction is 1-(2-carboxyphenylamino)-1-deoxy-D-ribulose 5-phosphate + H(+) = (1S,2R)-1-C-(indol-3-yl)glycerol 3-phosphate + CO2 + H2O. The protein operates within amino-acid biosynthesis; L-tryptophan biosynthesis; L-tryptophan from chorismate: step 4/5. The chain is Indole-3-glycerol phosphate synthase from Bacillus velezensis (strain DSM 23117 / BGSC 10A6 / LMG 26770 / FZB42) (Bacillus amyloliquefaciens subsp. plantarum).